We begin with the raw amino-acid sequence, 213 residues long: Orotate phosphoribosyltransferase (213 aa).

Lysine 26 lines the 5-phospho-alpha-D-ribose 1-diphosphate pocket. 34–35 (FF) contacts orotate. 5-phospho-alpha-D-ribose 1-diphosphate contacts are provided by residues 72–73 (YK), arginine 99, lysine 100, lysine 103, histidine 105, and 124–132 (DDVITAGTA). 2 residues coordinate orotate: threonine 128 and arginine 156.

It belongs to the purine/pyrimidine phosphoribosyltransferase family. PyrE subfamily. Homodimer. It depends on Mg(2+) as a cofactor.

It carries out the reaction orotidine 5'-phosphate + diphosphate = orotate + 5-phospho-alpha-D-ribose 1-diphosphate. The protein operates within pyrimidine metabolism; UMP biosynthesis via de novo pathway; UMP from orotate: step 1/2. Catalyzes the transfer of a ribosyl phosphate group from 5-phosphoribose 1-diphosphate to orotate, leading to the formation of orotidine monophosphate (OMP). The protein is Orotate phosphoribosyltransferase of Actinobacillus pleuropneumoniae serotype 5b (strain L20).